A 125-amino-acid chain; its full sequence is Large ribosomal subunit protein bL12 (125 aa).

This sequence belongs to the bacterial ribosomal protein bL12 family. Homodimer. Part of the ribosomal stalk of the 50S ribosomal subunit. Forms a multimeric L10(L12)X complex, where L10 forms an elongated spine to which 2 to 4 L12 dimers bind in a sequential fashion. Binds GTP-bound translation factors.

Forms part of the ribosomal stalk which helps the ribosome interact with GTP-bound translation factors. Is thus essential for accurate translation. The sequence is that of Large ribosomal subunit protein bL12 from Dictyoglomus thermophilum (strain ATCC 35947 / DSM 3960 / H-6-12).